We begin with the raw amino-acid sequence, 489 residues long: Cytochrome P450 2C70 (489 aa).

Positions 1–27 (MALFIFLGIWLSCLVFLFLWNQHHVRR) are cleaved as a signal peptide. Cysteine 434 contacts heme.

Belongs to the cytochrome P450 family. Requires heme as cofactor.

It localises to the endoplasmic reticulum membrane. Its subcellular location is the microsome membrane. It catalyses the reaction chenodeoxycholate + reduced [NADPH--hemoprotein reductase] + O2 = alpha-muricholate + oxidized [NADPH--hemoprotein reductase] + H2O + H(+). The enzyme catalyses ursodeoxycholate + reduced [NADPH--hemoprotein reductase] + O2 = beta-muricholate + oxidized [NADPH--hemoprotein reductase] + H2O + H(+). A cytochrome P450 monooxygenase involved in muricholic acid (MCA) synthesis. Hydroxylates at the 6-beta position two major bile acids, chenodeoxycholic acid (CDCA) and ursodeoxycholic acid (UDCA) to form alpha-MCA and beta-MCA, respectively. May regulate NR1H4/farnesoid X receptor signaling, as taurine-conjugated MCAs are antagonists of NR1H4. Mechanistically, uses molecular oxygen inserting one oxygen atom into a substrate, and reducing the second into a water molecule, with two electrons provided by NADPH via cytochrome P450 reductase (CPR; NADPH-ferrihemoprotein reductase). In Rattus norvegicus (Rat), this protein is Cytochrome P450 2C70.